We begin with the raw amino-acid sequence, 222 residues long: Germin-like protein subfamily 1 member 16 (222 aa).

The N-terminal stretch at 1–22 (MRVSQSLIPFAIIALVLSFVNA) is a signal peptide. C32 and C48 are disulfide-bonded. The Cupin type-1 domain occupies 62–213 (SGLNVPGNTN…AFQLDANVVK (152 aa)). N77 is a glycosylation site (N-linked (GlcNAc...) asparagine). Positions 110, 112, 117, and 159 each coordinate Mn(2+).

Belongs to the germin family. In terms of assembly, oligomer (believed to be a pentamer but probably hexamer).

It is found in the secreted. It localises to the extracellular space. Its subcellular location is the apoplast. May play a role in plant defense. Probably has no oxalate oxidase activity even if the active site is conserved. The protein is Germin-like protein subfamily 1 member 16 of Arabidopsis thaliana (Mouse-ear cress).